The following is a 752-amino-acid chain: Photosystem I P700 chlorophyll a apoprotein A1 (752 aa).

Helical transmembrane passes span 73–96 (IFSAHFGQLAVIFLWISGMHFHGA), 159–182 (LYWIAIGGLIMSALMLFAGWFHYH), 198–222 (MNHHLAGLLGLGCLSWSGHQIHIAL), 294–312 (IAHHHLALSVLFIFAGHMY), 349–372 (WHAQLAINLAMMGSLSIIVAHHMY), 388–414 (LSLFTHHMWIGGFCVVGGAAHGAIFMV), 436–458 (AIISHLNWVCIFLGCHSFGLYIH), and 533–551 (FMVHHIHAFTIHVTVLILL). C575 and C584 together coordinate [4Fe-4S] cluster. 2 consecutive transmembrane segments (helical) span residues 591–612 (HVFLGLFWMYNSISVVIFHFSW) and 666–688 (SSAYGLIFLGAHFIWAFSLMFLF). H677 lines the chlorophyll a' pocket. Chlorophyll a is bound by residues M685 and Y693. Residue W694 coordinates phylloquinone. A helical membrane pass occupies residues 726 to 746 (AVGLAHYLLGGIGTTWSFFLA).

This sequence belongs to the PsaA/PsaB family. The PsaA/B heterodimer binds the P700 chlorophyll special pair and subsequent electron acceptors. PSI consists of a core antenna complex that captures photons, and an electron transfer chain that converts photonic excitation into a charge separation. The eukaryotic PSI reaction center is composed of at least 11 subunits. The cofactor is P700 is a chlorophyll a/chlorophyll a' dimer, A0 is one or more chlorophyll a, A1 is one or both phylloquinones and FX is a shared 4Fe-4S iron-sulfur center..

Its subcellular location is the plastid. The protein resides in the chloroplast thylakoid membrane. It carries out the reaction reduced [plastocyanin] + hnu + oxidized [2Fe-2S]-[ferredoxin] = oxidized [plastocyanin] + reduced [2Fe-2S]-[ferredoxin]. Its function is as follows. PsaA and PsaB bind P700, the primary electron donor of photosystem I (PSI), as well as the electron acceptors A0, A1 and FX. PSI is a plastocyanin/cytochrome c6-ferredoxin oxidoreductase, converting photonic excitation into a charge separation, which transfers an electron from the donor P700 chlorophyll pair to the spectroscopically characterized acceptors A0, A1, FX, FA and FB in turn. Oxidized P700 is reduced on the lumenal side of the thylakoid membrane by plastocyanin or cytochrome c6. This chain is Photosystem I P700 chlorophyll a apoprotein A1, found in Trieres chinensis (Marine centric diatom).